We begin with the raw amino-acid sequence, 431 residues long: Adenylosuccinate synthetase (431 aa).

GTP-binding positions include 13–19 and 41–43; these read GDEGKGK and GHT. The active-site Proton acceptor is the Asp-14. The Mg(2+) site is built by Asp-14 and Gly-41. IMP contacts are provided by residues 14-17, 39-42, Thr-130, Arg-144, Gln-225, Thr-240, and Arg-304; these read DEGK and NAGH. His-42 functions as the Proton donor in the catalytic mechanism. Position 300–306 (300–306) interacts with substrate; the sequence is ATTGRAR. GTP contacts are provided by residues Arg-306, 332 to 334, and 415 to 417; these read KLD and STG.

The protein belongs to the adenylosuccinate synthetase family. Homodimer. Mg(2+) is required as a cofactor.

Its subcellular location is the cytoplasm. It catalyses the reaction IMP + L-aspartate + GTP = N(6)-(1,2-dicarboxyethyl)-AMP + GDP + phosphate + 2 H(+). It functions in the pathway purine metabolism; AMP biosynthesis via de novo pathway; AMP from IMP: step 1/2. Its function is as follows. Plays an important role in the de novo pathway of purine nucleotide biosynthesis. Catalyzes the first committed step in the biosynthesis of AMP from IMP. The protein is Adenylosuccinate synthetase of Ectopseudomonas mendocina (strain ymp) (Pseudomonas mendocina).